Here is a 138-residue protein sequence, read N- to C-terminus: Ostreolysin A6 (138 aa).

The protein belongs to the aegerolysin family. In terms of assembly, monomer.

Functionally, has hemolytic activity against bovine erythrocytes at nanomolar concentrations in vitro. Promotes active pleurotolysin B (PlyB)-dependent permeabilization of membranes rich in cholesterol and sphingomyelin. May play an important role in the initial phase of fungal fruiting. In Pleurotus ostreatus (Oyster mushroom), this protein is Ostreolysin A6 (OlyA6).